A 343-amino-acid polypeptide reads, in one-letter code: MDPKEVLKRLTEGVSLSQEEAKELADLIMEGSIPEPLVAGILVALKMKGETPDEIIGFVNSMRQHALKLDLRNTLDTAGTGGDGIGTINVSTATALAVSSVFPVAKHGNRAASSRSGSADFLESLGYNIQVPPEKAKDLLSRNNFVFLFAQLYHPSMKNVAPVRKVLGVRTIFNLLGPLTNPAGSERQVMGVYSLPFMRKLAEAALKLGYVKLVLVHGEPGLDEVSPQGKTYITEVTGSKVEEYTYDFSEIIGQPVPVSRLTTTDPLDSVRRVLMASMGRDEAVEKFIRINVSVALYTAGLVSDFKDGFELSEELVRKLPDRIETLVRDNGDPSKIKAIKGSL.

5-phospho-alpha-D-ribose 1-diphosphate-binding positions include Gly-79, 82-83 (GD), Thr-87, 89-92 (NVST), 106-114 (KHGNRAASS), and Ser-118. Gly-79 is a binding site for anthranilate. Ser-91 lines the Mg(2+) pocket. An anthranilate-binding site is contributed by Asn-109. Position 164 (Arg-164) interacts with anthranilate. Mg(2+)-binding residues include Asp-223 and Glu-224.

The protein belongs to the anthranilate phosphoribosyltransferase family. As to quaternary structure, homodimer. Mg(2+) is required as a cofactor.

The catalysed reaction is N-(5-phospho-beta-D-ribosyl)anthranilate + diphosphate = 5-phospho-alpha-D-ribose 1-diphosphate + anthranilate. Its pathway is amino-acid biosynthesis; L-tryptophan biosynthesis; L-tryptophan from chorismate: step 2/5. Catalyzes the transfer of the phosphoribosyl group of 5-phosphorylribose-1-pyrophosphate (PRPP) to anthranilate to yield N-(5'-phosphoribosyl)-anthranilate (PRA). The chain is Anthranilate phosphoribosyltransferase from Metallosphaera sedula (strain ATCC 51363 / DSM 5348 / JCM 9185 / NBRC 15509 / TH2).